A 414-amino-acid chain; its full sequence is Calcium/calmodulin-dependent protein kinase cmkA (414 aa).

Residues 23–278 (YRFGRTLGAG…SEEALKHPWL (256 aa)) form the Protein kinase domain. Residues 29 to 37 (LGAGTYGIV) and lysine 50 each bind ATP. Aspartate 142 functions as the Proton acceptor in the catalytic mechanism. The tract at residues 278–314 (LKGESASDRDLLPEIRAYIARSRLKRGIEIIKLANRI) is autoinhibitory domain. The segment at 293 to 315 (RAYIARSRLKRGIEIIKLANRIE) is calmodulin-binding. Disordered regions lie at residues 320 to 375 (QEED…KRSL) and 394 to 414 (EMKE…RAHS). Polar residues predominate over residues 351 to 364 (STENSNTHPASTGN).

It belongs to the protein kinase superfamily. CAMK Ser/Thr protein kinase family. CaMK subfamily. In terms of assembly, monomer. In terms of processing, autophosphorylated in a calcium/calmodulin-dependent manner.

It carries out the reaction L-seryl-[protein] + ATP = O-phospho-L-seryl-[protein] + ADP + H(+). The catalysed reaction is L-threonyl-[protein] + ATP = O-phospho-L-threonyl-[protein] + ADP + H(+). With respect to regulation, activated by Ca(2+)/calmodulin. Binding of calmodulin may relieve intrasteric autoinhibition. Calcium/calmodulin-dependent protein kinase. Required in nuclear division cycle for progression from G2 to mitosis. Required for hyphal growth. The polypeptide is Calcium/calmodulin-dependent protein kinase cmkA (cmkA) (Emericella nidulans (strain FGSC A4 / ATCC 38163 / CBS 112.46 / NRRL 194 / M139) (Aspergillus nidulans)).